The chain runs to 147 residues: Hemoglobin subunit epsilon (147 aa).

The region spanning 3-147 is the Globin domain; that stretch reads HWSAEEKQLI…VAHALARKYH (145 aa). Heme b is bound by residues His-64 and His-93.

The protein belongs to the globin family. Heterotetramer of two epsilon chains and two alpha chains. Hemoglobin E (Hbe) contains a alpha-A chains while hemoglobin M (Hbm) contains alpha-D chains.

Its function is as follows. Beta-type chain found in early embryos. The protein is Hemoglobin subunit epsilon (HBE) of Gallus gallus (Chicken).